Consider the following 300-residue polypeptide: tRNA pseudouridine synthase B (300 aa).

Catalysis depends on D38, which acts as the Nucleophile.

The protein belongs to the pseudouridine synthase TruB family. Type 1 subfamily.

It carries out the reaction uridine(55) in tRNA = pseudouridine(55) in tRNA. Functionally, responsible for synthesis of pseudouridine from uracil-55 in the psi GC loop of transfer RNAs. This Dehalococcoides mccartyi (strain ATCC BAA-2100 / JCM 16839 / KCTC 5957 / BAV1) protein is tRNA pseudouridine synthase B.